The sequence spans 158 residues: Urease accessory protein UreE (158 aa).

Belongs to the UreE family.

The protein localises to the cytoplasm. Involved in urease metallocenter assembly. Binds nickel. Probably functions as a nickel donor during metallocenter assembly. The protein is Urease accessory protein UreE of Microcystis aeruginosa (strain NIES-843 / IAM M-2473).